The following is a 607-amino-acid chain: ATP-dependent RNA helicase DBP6 (607 aa).

The interval 1–83 (MFAARFDPSR…GTGEADKRHQ (83 aa)) is disordered. Acidic residues predominate over residues 34-59 (QDESESEMSSAESEDEAMQLDDEEEV). The span at 60–69 (VDSKGKENHG) shows a compositional bias: basic and acidic residues. A Q motif motif is present at residues 184 to 192 (AFPIQTALL). The Helicase ATP-binding domain maps to 208 to 388 (RYYTRKVGDI…DLQLHNPKLF (181 aa)). Residue 221-228 (ASTGSGKT) coordinates ATP. Positions 328 to 331 (DEAD) match the DEAD box motif. One can recognise a Helicase C-terminal domain in the interval 419–578 (ILLRLLPLLS…GSHLFFDEEQ (160 aa)).

Belongs to the DEAD box helicase family. DDX51/DBP6 subfamily. Associated with pre-ribosomal particles.

The protein localises to the nucleus. It localises to the nucleolus. It catalyses the reaction ATP + H2O = ADP + phosphate + H(+). Its function is as follows. ATP-binding RNA helicase involved in the biogenesis of 60S ribosomal subunits and is required for the normal formation of 25S and 5.8S rRNAs. The protein is ATP-dependent RNA helicase DBP6 (DBP6) of Eremothecium gossypii (strain ATCC 10895 / CBS 109.51 / FGSC 9923 / NRRL Y-1056) (Yeast).